A 396-amino-acid polypeptide reads, in one-letter code: Ribosomal RNA large subunit methyltransferase I (396 aa).

Positions 2 to 79 (AIRIKLKPGR…REEEIDREFF (78 aa)) constitute a PUA domain.

It belongs to the methyltransferase superfamily. RlmI family.

It is found in the cytoplasm. It carries out the reaction cytidine(1962) in 23S rRNA + S-adenosyl-L-methionine = 5-methylcytidine(1962) in 23S rRNA + S-adenosyl-L-homocysteine + H(+). Specifically methylates the cytosine at position 1962 (m5C1962) of 23S rRNA. This Shewanella oneidensis (strain ATCC 700550 / JCM 31522 / CIP 106686 / LMG 19005 / NCIMB 14063 / MR-1) protein is Ribosomal RNA large subunit methyltransferase I.